We begin with the raw amino-acid sequence, 216 residues long: Pyridoxine/pyridoxamine 5'-phosphate oxidase (216 aa).

Residues 65 to 70, 80 to 81, Arg-86, Lys-87, and Gln-109 contribute to the FMN site; these read RMVLLK and YT. Substrate is bound at residue Lys-70. Substrate-binding residues include Tyr-127, Arg-131, and Ser-135. Residues 144–145 and Trp-189 each bind FMN; that span reads QS. Substrate is bound at residue 195–197; sequence RLH. Residue Arg-199 participates in FMN binding.

This sequence belongs to the pyridoxamine 5'-phosphate oxidase family. Homodimer. FMN serves as cofactor.

The enzyme catalyses pyridoxamine 5'-phosphate + O2 + H2O = pyridoxal 5'-phosphate + H2O2 + NH4(+). The catalysed reaction is pyridoxine 5'-phosphate + O2 = pyridoxal 5'-phosphate + H2O2. It participates in cofactor metabolism; pyridoxal 5'-phosphate salvage; pyridoxal 5'-phosphate from pyridoxamine 5'-phosphate: step 1/1. It functions in the pathway cofactor metabolism; pyridoxal 5'-phosphate salvage; pyridoxal 5'-phosphate from pyridoxine 5'-phosphate: step 1/1. In terms of biological role, catalyzes the oxidation of either pyridoxine 5'-phosphate (PNP) or pyridoxamine 5'-phosphate (PMP) into pyridoxal 5'-phosphate (PLP). The polypeptide is Pyridoxine/pyridoxamine 5'-phosphate oxidase (Sphingopyxis alaskensis (strain DSM 13593 / LMG 18877 / RB2256) (Sphingomonas alaskensis)).